We begin with the raw amino-acid sequence, 456 residues long: Argininosuccinate lyase (456 aa).

This sequence belongs to the lyase 1 family. Argininosuccinate lyase subfamily.

It is found in the cytoplasm. It carries out the reaction 2-(N(omega)-L-arginino)succinate = fumarate + L-arginine. It participates in amino-acid biosynthesis; L-arginine biosynthesis; L-arginine from L-ornithine and carbamoyl phosphate: step 3/3. The chain is Argininosuccinate lyase from Listeria monocytogenes serotype 4a (strain HCC23).